The sequence spans 133 residues: Large ribosomal subunit protein uL14 (133 aa).

The protein belongs to the universal ribosomal protein uL14 family. As to quaternary structure, part of the 50S ribosomal subunit. Forms a cluster with proteins L3 and L24e, part of which may contact the 16S rRNA in 2 intersubunit bridges.

Binds to 23S rRNA. Forms part of two intersubunit bridges in the 70S ribosome. This Methanopyrus kandleri (strain AV19 / DSM 6324 / JCM 9639 / NBRC 100938) protein is Large ribosomal subunit protein uL14.